The primary structure comprises 152 residues: Deoxyuridine 5'-triphosphate nucleotidohydrolase (152 aa).

Substrate is bound by residues 71 to 73 (RSG), asparagine 84, 88 to 90 (LID), and methionine 98.

The protein belongs to the dUTPase family. Homotrimer. It depends on Mg(2+) as a cofactor.

The enzyme catalyses dUTP + H2O = dUMP + diphosphate + H(+). Its pathway is pyrimidine metabolism; dUMP biosynthesis; dUMP from dCTP (dUTP route): step 2/2. This enzyme is involved in nucleotide metabolism: it produces dUMP, the immediate precursor of thymidine nucleotides and it decreases the intracellular concentration of dUTP so that uracil cannot be incorporated into DNA. This is Deoxyuridine 5'-triphosphate nucleotidohydrolase from Escherichia coli O157:H7.